The primary structure comprises 366 residues: Class I histocompatibility antigen, Gogo-C*0201 alpha chain (366 aa).

An N-terminal signal peptide occupies residues 1 to 24 (MRVMAPRTLILPLSGALALTETWA). The alpha-1 stretch occupies residues 25 to 114 (GSHSMRYFYT…LRGYYNQSED (90 aa)). Over 25 to 308 (GSHSMRYFYT…EPSSQPTIPI (284 aa)) the chain is Extracellular. An N-linked (GlcNAc...) asparagine glycan is attached at N110. Residues 115–206 (GSHTLQSMYG…ENGKETLQRA (92 aa)) form an alpha-2 region. Cystine bridges form between C125/C188 and C227/C283. The alpha-3 stretch occupies residues 207–298 (EPPKTHVTHH…GLPEPLTLRW (92 aa)). Residues 209–297 (PKTHVTHHPL…EGLPEPLTLR (89 aa)) form the Ig-like C1-type domain. The segment at 299 to 308 (EPSSQPTIPI) is connecting peptide. A helical transmembrane segment spans residues 309-333 (VGIVVGLAVLVVLAVLGAVVTAMMC). Residues 334-366 (RRKSSGGKGGSCSQAACSNSAQGSDESLITCKA) lie on the Cytoplasmic side of the membrane.

It belongs to the MHC class I family. As to quaternary structure, heterodimer of an alpha chain and a beta chain (beta-2-microglobulin).

Its subcellular location is the membrane. Functionally, involved in the presentation of foreign antigens to the immune system. This chain is Class I histocompatibility antigen, Gogo-C*0201 alpha chain, found in Gorilla gorilla gorilla (Western lowland gorilla).